The following is a 206-amino-acid chain: Large ribosomal subunit protein mL62 (206 aa).

A mitochondrion-targeting transit peptide spans M1–A29. Q90 is modified (N5-methylglutamine).

Belongs to the prokaryotic/mitochondrial release factor family. Mitochondrion-specific ribosomal protein mL62 subfamily. As to quaternary structure, component of the mitochondrial large ribosomal subunit (mt-LSU). Mature mammalian 55S mitochondrial ribosomes consist of a small (28S) and a large (39S) subunit. The 28S small subunit contains a 12S ribosomal RNA (12S mt-rRNA) and 30 different proteins. The 39S large subunit contains a 16S rRNA (16S mt-rRNA), a copy of mitochondrial valine transfer RNA (mt-tRNA(Val)), which plays an integral structural role, and 52 different proteins. In terms of processing, methylation of glutamine in the GGQ triplet by HEMK1. As to expression, down-regulated during the in vitro differentiation of HT29-D4 colon carcinoma cells.

The protein resides in the mitochondrion. It catalyses the reaction an N-acyl-L-alpha-aminoacyl-tRNA + H2O = an N-acyl-L-amino acid + a tRNA + H(+). In terms of biological role, essential peptidyl-tRNA hydrolase component of the mitochondrial large ribosomal subunit. Acts as a codon-independent translation release factor that has lost all stop codon specificity and directs the termination of translation in mitochondrion, possibly in case of abortive elongation. Involved in the hydrolysis of peptidyl-tRNAs that have been prematurely terminated and thus in the recycling of stalled mitochondrial ribosomes. The sequence is that of Large ribosomal subunit protein mL62 from Homo sapiens (Human).